Reading from the N-terminus, the 384-residue chain is Substance-K receptor (384 aa).

Topologically, residues 1–32 (MGGRAIVTDTNIFSGLESNTTGVTAFSMPAWQ) are extracellular. An N-linked (GlcNAc...) asparagine glycan is attached at Asn-19. A helical transmembrane segment spans residues 33-56 (LALWATAYLGLVLVAVTGNATVIW). At 57 to 69 (IILAHERMRTVTN) the chain is on the cytoplasmic side. A helical transmembrane segment spans residues 70-90 (YFIINLALADLCMAAFNATFN). At 91–107 (FVYASHNIWYFGRAFCY) the chain is on the extracellular side. Cys-106 and Cys-181 are oxidised to a cystine. Residues 108 to 129 (FQNLFPITAMFVSIYSMTAIAA) form a helical membrane-spanning segment. Residues 130 to 149 (DRYMAIVHPFQPRLSAPITK) are Cytoplasmic-facing. The chain crosses the membrane as a helical span at residues 150–170 (ATIAGIWLVALALASPQCFYS). Residues 171 to 196 (TITVDQGATKCVVAWPNDNGGKMLLL) lie on the Extracellular side of the membrane. A helical transmembrane segment spans residues 197–218 (YHLVVFVLVYFLPLVVMFVAYS). The Cytoplasmic portion of the chain corresponds to 219–251 (VIGLTLWKRAVPRHQAHGANLRHLHAKKKFVKA). A helical transmembrane segment spans residues 252-272 (MVLVVLTFAICWLPYHLYFIL). Topologically, residues 273–290 (GSFQKDIYYRKFIQQVYL) are extracellular. Residues 291–310 (ALFWLAMSSTMYNPIIYCCL) traverse the membrane as a helical segment. Residues 311–384 (NHRFRSGFRL…SPQDVEPAAP (74 aa)) are Cytoplasmic-facing. The S-palmitoyl cysteine moiety is linked to residue Cys-324.

This sequence belongs to the G-protein coupled receptor 1 family.

The protein localises to the cell membrane. In terms of biological role, this is a receptor for the tachykinin neuropeptide substance K (neurokinin A). It is associated with G proteins that activate a phosphatidylinositol-calcium second messenger system. The rank order of affinity of this receptor to tachykinins is: substance K &gt; neuromedin-K &gt; substance P. The protein is Substance-K receptor (TACR2) of Mesocricetus auratus (Golden hamster).